A 281-amino-acid chain; its full sequence is Pantothenate synthetase (281 aa).

Residue 30 to 37 (MGALHHGH) coordinates ATP. His37 functions as the Proton donor in the catalytic mechanism. Gln61 lines the (R)-pantoate pocket. Residue Gln61 coordinates beta-alanine. 147–150 (GEKD) contributes to the ATP binding site. Gln153 lines the (R)-pantoate pocket. Residues Leu176 and 184–187 (SSSR) contribute to the ATP site.

Belongs to the pantothenate synthetase family. Homodimer.

The protein resides in the cytoplasm. The enzyme catalyses (R)-pantoate + beta-alanine + ATP = (R)-pantothenate + AMP + diphosphate + H(+). It participates in cofactor biosynthesis; (R)-pantothenate biosynthesis; (R)-pantothenate from (R)-pantoate and beta-alanine: step 1/1. In terms of biological role, catalyzes the condensation of pantoate with beta-alanine in an ATP-dependent reaction via a pantoyl-adenylate intermediate. This chain is Pantothenate synthetase, found in Bartonella bacilliformis (strain ATCC 35685 / KC583 / Herrer 020/F12,63).